Reading from the N-terminus, the 114-residue chain is Fatty acid-binding protein, liver (114 aa).

The protein belongs to the calycin superfamily. Fatty-acid binding protein (FABP) family. The N-terminus is blocked.

It localises to the cytoplasm. Its function is as follows. FABPs are thought to play a role in the intracellular transport of long-chain fatty acids and their acyl-CoA esters. In Lethenteron camtschaticum (Japanese lamprey), this protein is Fatty acid-binding protein, liver.